A 1342-amino-acid polypeptide reads, in one-letter code: MVYSYTEKKRIRKDFGKRPKVLDIPYLLSIQLNSFKKFIQPDLSGQHGLEAAFRSVFPIRGYNGNSELQYVSYRLGETIFDVKECQIRGATYSAPLRVKLRLVIYERDILEATVKDIKEQEVYMGEIPLMTNNGTFIINGTERVVVSQLHRSPGVFFDSDKGKTHSSGKVLYNARIIPYRGSWLDFEFDPKDNLFVRIDRRRKLPVSIILRALNYNTEEILNIFFEKNIFKIENNKIVLELVPERLRGETASFNIKKNGIIYVEKGRRITAKHIQELKNNKIKSITVPVEYILGRIVSKNYVDKKTGETIISSNTELSLEILEKLKKLGFYSIETLFTNDLDHGPYISETLRIDSSNDRMSALIEIYRVMRPGEPPTKEATENLFENLFFSEDRYDLSTVGRMKFNRSLLREETKGSSTLNKEDIIDVIKKIIDIRNGKGEVDDIDHLGNRRVRSVGEMAENQFRIGLVRVERAVKERLSIGDLDTLMPQDMINAKPISAAVKEFFGSSQLSQFMDQNNPLSEITHKRRISALGLGGLTRERAGFEVRDVHPTHYGRVCPIETPEGPNIGLINSLSVYAQTNSYGFLETPYRKVCNGLVSEEIHYLSAIEEGNYIIAQANTNIDKTGFFTDDLVTCRHKGESSLFNRNQVNYMDVSTQQIVSVGASLIPFLEHDDANRALMGANMQRQAVPTLKTDKPLIGTGMERAVAVDSGVTAVAKRSGVVQYVDASRIVIKVDEKEMYSREAGIDIYNLTKYTRSNQNTCINQQPCVNLGEKIKKGDVLADGPSTDLGELALGQNMRVAFMPWNGYNFEDSILVSERVVQEDRFTTIHIQELSCISRDTKLGAEEISSDIPNVGEAALSKLDESGIVYIGAEVTGGDILVGKVTPKGETQLTPEEKLLRAIFGEKASDVKDSSLRVPNGVSGTVIDVQIFTRDGVKKDKRALEIEDMQLKKIKQDLTEEFKIFESSLFTHIKKTFISLDIETKQLDTLPFEKWFSVDIKQKDKKKEIEKLAKQHHELKEEFNKKIEIKRQKITQGDDLAPGVLKIVKVYLAVKRQIQPGDKMAGRHGNKGVISKINPVEDMPYDENGIPVDIVLNPLGVPSRMNIGQILETHLGMAAKGIGDKINHMLKTQEKISNLRKFIQKAFDLGDNLRQKVNLDTFSNEEILRLAKNLKNGIPISTPVFDGAQENEIKQMLKFAGLPTSGQIILFDGRTGEKFERPVTVGYMYMLKLNHLVDDKMHARSTGSYSLVTQQPLGGKAQFGGQRFGEMEVWALEAYGASYTLQEMLTVKSDDVNGRTKMYKNIVDGNHQMEPGMPESFNVLLKEIRSLGINIELESE.

The protein belongs to the RNA polymerase beta chain family. In terms of assembly, the RNAP catalytic core consists of 2 alpha, 1 beta, 1 beta' and 1 omega subunit. When a sigma factor is associated with the core the holoenzyme is formed, which can initiate transcription.

It catalyses the reaction RNA(n) + a ribonucleoside 5'-triphosphate = RNA(n+1) + diphosphate. Functionally, DNA-dependent RNA polymerase catalyzes the transcription of DNA into RNA using the four ribonucleoside triphosphates as substrates. This is DNA-directed RNA polymerase subunit beta from Buchnera aphidicola subsp. Acyrthosiphon pisum (strain 5A).